The following is a 269-amino-acid chain: Glutamate 5-kinase (269 aa).

Residue K14 coordinates ATP. 3 residues coordinate substrate: S54, D141, and N157. ATP is bound by residues 177 to 178 (SD) and 219 to 225 (TGGMVTK).

Belongs to the glutamate 5-kinase family.

Its subcellular location is the cytoplasm. It carries out the reaction L-glutamate + ATP = L-glutamyl 5-phosphate + ADP. It functions in the pathway amino-acid biosynthesis; L-proline biosynthesis; L-glutamate 5-semialdehyde from L-glutamate: step 1/2. Catalyzes the transfer of a phosphate group to glutamate to form L-glutamate 5-phosphate. The sequence is that of Glutamate 5-kinase from Clostridium perfringens (strain 13 / Type A).